Reading from the N-terminus, the 212-residue chain is uncharacterized protein (212 aa).

The tract at residues 47 to 129 (RELLDRRRSQ…GNIDNGQPRR (83 aa)) is disordered.

This is an uncharacterized protein from Caenorhabditis elegans.